Consider the following 473-residue polypeptide: 3-isopropylmalate dehydratase large subunit (473 aa).

The [4Fe-4S] cluster site is built by Cys-354, Cys-414, and Cys-417.

It belongs to the aconitase/IPM isomerase family. LeuC type 1 subfamily. In terms of assembly, heterodimer of LeuC and LeuD. Requires [4Fe-4S] cluster as cofactor.

It catalyses the reaction (2R,3S)-3-isopropylmalate = (2S)-2-isopropylmalate. It participates in amino-acid biosynthesis; L-leucine biosynthesis; L-leucine from 3-methyl-2-oxobutanoate: step 2/4. In terms of biological role, catalyzes the isomerization between 2-isopropylmalate and 3-isopropylmalate, via the formation of 2-isopropylmaleate. The polypeptide is 3-isopropylmalate dehydratase large subunit (Mycobacterium tuberculosis (strain CDC 1551 / Oshkosh)).